The primary structure comprises 533 residues: Amidophosphoribosyltransferase (533 aa).

The active-site Nucleophile is Cys2. Residues 2–238 form the Glutamine amidotransferase type-2 domain; sequence CGILALMLAD…PGECVFIRRS (237 aa). Mg(2+) is bound by residues Asp383 and Asp384. Phosphoserine is present on Ser506.

The protein in the C-terminal section; belongs to the purine/pyrimidine phosphoribosyltransferase family. Mg(2+) serves as cofactor.

It carries out the reaction 5-phospho-beta-D-ribosylamine + L-glutamate + diphosphate = 5-phospho-alpha-D-ribose 1-diphosphate + L-glutamine + H2O. It participates in purine metabolism; IMP biosynthesis via de novo pathway; N(1)-(5-phospho-D-ribosyl)glycinamide from 5-phospho-alpha-D-ribose 1-diphosphate: step 1/2. The polypeptide is Amidophosphoribosyltransferase (ade4) (Schizosaccharomyces pombe (strain 972 / ATCC 24843) (Fission yeast)).